We begin with the raw amino-acid sequence, 217 residues long: Octanoyltransferase (217 aa).

Residues 32–207 (DDSADEIWLV…HMIKKLNATQ (176 aa)) enclose the BPL/LPL catalytic domain. Substrate contacts are provided by residues 71–78 (RGGQVTYH), 138–140 (SLG), and 151–153 (GLA). The active-site Acyl-thioester intermediate is the Cys-169.

The protein belongs to the LipB family.

Its subcellular location is the cytoplasm. It carries out the reaction octanoyl-[ACP] + L-lysyl-[protein] = N(6)-octanoyl-L-lysyl-[protein] + holo-[ACP] + H(+). The protein operates within protein modification; protein lipoylation via endogenous pathway; protein N(6)-(lipoyl)lysine from octanoyl-[acyl-carrier-protein]: step 1/2. Catalyzes the transfer of endogenously produced octanoic acid from octanoyl-acyl-carrier-protein onto the lipoyl domains of lipoate-dependent enzymes. Lipoyl-ACP can also act as a substrate although octanoyl-ACP is likely to be the physiological substrate. The sequence is that of Octanoyltransferase from Pseudoalteromonas translucida (strain TAC 125).